A 428-amino-acid chain; its full sequence is Dihydroorotase (428 aa).

Positions 61 and 63 each coordinate Zn(2+). Residues histidine 63–arginine 65 and asparagine 95 contribute to the substrate site. Zn(2+)-binding residues include aspartate 153, histidine 180, and histidine 233. Asparagine 279 lines the substrate pocket. Aspartate 306 contacts Zn(2+). Residue aspartate 306 is part of the active site. Residues histidine 310 and phenylalanine 324–glycine 325 each bind substrate.

This sequence belongs to the metallo-dependent hydrolases superfamily. DHOase family. Class I DHOase subfamily. Zn(2+) serves as cofactor.

The catalysed reaction is (S)-dihydroorotate + H2O = N-carbamoyl-L-aspartate + H(+). It functions in the pathway pyrimidine metabolism; UMP biosynthesis via de novo pathway; (S)-dihydroorotate from bicarbonate: step 3/3. Catalyzes the reversible cyclization of carbamoyl aspartate to dihydroorotate. This chain is Dihydroorotase, found in Geobacillus kaustophilus (strain HTA426).